The primary structure comprises 163 residues: MPSFDIVSEITLYEIRNAVENANRVLSTRYDFRGVEATIELNEKAETIKVTTESDFQLEQLIEILISSCVKRDIQHNSLDIPADSEHSGKLYSKEIKLKQGIETDMAKKIIKLIKDAKLKVQTQIQGEQVRVSGKSRDDLQATIQLVKNAELGQPFQFNNFRD.

Belongs to the YajQ family.

Functionally, nucleotide-binding protein. In Histophilus somni (strain 2336) (Haemophilus somnus), this protein is Nucleotide-binding protein HSM_1099.